Consider the following 95-residue polypeptide: Aspartyl/glutamyl-tRNA(Asn/Gln) amidotransferase subunit C (95 aa).

This sequence belongs to the GatC family. Heterotrimer of A, B and C subunits.

It catalyses the reaction L-glutamyl-tRNA(Gln) + L-glutamine + ATP + H2O = L-glutaminyl-tRNA(Gln) + L-glutamate + ADP + phosphate + H(+). The enzyme catalyses L-aspartyl-tRNA(Asn) + L-glutamine + ATP + H2O = L-asparaginyl-tRNA(Asn) + L-glutamate + ADP + phosphate + 2 H(+). Functionally, allows the formation of correctly charged Asn-tRNA(Asn) or Gln-tRNA(Gln) through the transamidation of misacylated Asp-tRNA(Asn) or Glu-tRNA(Gln) in organisms which lack either or both of asparaginyl-tRNA or glutaminyl-tRNA synthetases. The reaction takes place in the presence of glutamine and ATP through an activated phospho-Asp-tRNA(Asn) or phospho-Glu-tRNA(Gln). In Laribacter hongkongensis (strain HLHK9), this protein is Aspartyl/glutamyl-tRNA(Asn/Gln) amidotransferase subunit C.